The chain runs to 383 residues: UDP-N-acetylglucosamine--N-acetylmuramyl-(pentapeptide) pyrophosphoryl-undecaprenol N-acetylglucosamine transferase (383 aa).

UDP-N-acetyl-alpha-D-glucosamine is bound by residues 11–13 (TGG), N125, R166, S191, I246, and Q291. The interval 364-383 (PNGRERTPIEAEKKAPRSNS) is disordered. A compositionally biased stretch (basic and acidic residues) spans 366-383 (GRERTPIEAEKKAPRSNS).

This sequence belongs to the glycosyltransferase 28 family. MurG subfamily.

It localises to the cell inner membrane. The catalysed reaction is di-trans,octa-cis-undecaprenyl diphospho-N-acetyl-alpha-D-muramoyl-L-alanyl-D-glutamyl-meso-2,6-diaminopimeloyl-D-alanyl-D-alanine + UDP-N-acetyl-alpha-D-glucosamine = di-trans,octa-cis-undecaprenyl diphospho-[N-acetyl-alpha-D-glucosaminyl-(1-&gt;4)]-N-acetyl-alpha-D-muramoyl-L-alanyl-D-glutamyl-meso-2,6-diaminopimeloyl-D-alanyl-D-alanine + UDP + H(+). Its pathway is cell wall biogenesis; peptidoglycan biosynthesis. Its function is as follows. Cell wall formation. Catalyzes the transfer of a GlcNAc subunit on undecaprenyl-pyrophosphoryl-MurNAc-pentapeptide (lipid intermediate I) to form undecaprenyl-pyrophosphoryl-MurNAc-(pentapeptide)GlcNAc (lipid intermediate II). The chain is UDP-N-acetylglucosamine--N-acetylmuramyl-(pentapeptide) pyrophosphoryl-undecaprenol N-acetylglucosamine transferase from Myxococcus xanthus (strain DK1622).